The primary structure comprises 80 residues: Putative membrane protein insertion efficiency factor (80 aa).

The tract at residues 61–80 (KTGKDPVPDHFSLKRNQEGE) is disordered. Basic and acidic residues predominate over residues 62–80 (TGKDPVPDHFSLKRNQEGE).

The protein belongs to the UPF0161 family.

The protein localises to the cell membrane. Could be involved in insertion of integral membrane proteins into the membrane. This is Putative membrane protein insertion efficiency factor from Streptococcus pneumoniae (strain 70585).